We begin with the raw amino-acid sequence, 140 residues long: Large ribosomal subunit protein bL17 (140 aa).

Belongs to the bacterial ribosomal protein bL17 family. As to quaternary structure, part of the 50S ribosomal subunit. Contacts protein L32.

This is Large ribosomal subunit protein bL17 from Paracoccus denitrificans (strain Pd 1222).